The primary structure comprises 875 residues: Alanine--tRNA ligase (875 aa).

Zn(2+)-binding residues include histidine 564, histidine 568, cysteine 666, and histidine 670.

The protein belongs to the class-II aminoacyl-tRNA synthetase family. In terms of assembly, homotetramer. Requires Zn(2+) as cofactor.

The protein resides in the cytoplasm. It carries out the reaction tRNA(Ala) + L-alanine + ATP = L-alanyl-tRNA(Ala) + AMP + diphosphate. In terms of biological role, catalyzes the attachment of alanine to tRNA(Ala) in a two-step reaction: alanine is first activated by ATP to form Ala-AMP and then transferred to the acceptor end of tRNA(Ala). Also edits incorrectly charged Ser-tRNA(Ala) and Gly-tRNA(Ala) via its editing domain. This is Alanine--tRNA ligase from Yersinia enterocolitica serotype O:8 / biotype 1B (strain NCTC 13174 / 8081).